The primary structure comprises 114 residues: Nucleoid-associated protein SGR_3378 (114 aa).

Belongs to the YbaB/EbfC family. In terms of assembly, homodimer.

The protein resides in the cytoplasm. It is found in the nucleoid. In terms of biological role, binds to DNA and alters its conformation. May be involved in regulation of gene expression, nucleoid organization and DNA protection. The sequence is that of Nucleoid-associated protein SGR_3378 from Streptomyces griseus subsp. griseus (strain JCM 4626 / CBS 651.72 / NBRC 13350 / KCC S-0626 / ISP 5235).